The following is a 295-amino-acid chain: Reticulon-like protein 1 (295 aa).

The Cytoplasmic segment spans residues 1–50 (MSASAQHSQAQQQQQQKSCNCDLLLWRNPVQTGKYFGGSLLALLILKKVN). The region spanning 20–220 (NCDLLLWRNP…ISNLVKSKTA (201 aa)) is the Reticulon domain. The helical transmembrane segment at 51 to 73 (LITFFLKVAYTILFTTGSIEFVS) threads the bilayer. Residues 74–142 (KLFLGQGLIT…ALFLLHKFFS (69 aa)) lie on the Lumenal side of the membrane. Residues 143–163 (WFSIWTIVFVADIFTFTLPVI) form a helical membrane-spanning segment. Over 164–295 (YHSYKHEIDA…LQNELEKNNA (132 aa)) the chain is Cytoplasmic. 2 positions are modified to phosphothreonine: Thr186 and Thr219. The span at 219 to 235 (TAPVSSTAGPQTASTSK) shows a compositional bias: polar residues. The segment at 219-295 (TAPVSSTAGP…LQNELEKNNA (77 aa)) is disordered. Ser232 bears the Phosphoserine mark. The stretch at 265–295 (STTQEFNVDELSNELKKSTKNLQNELEKNNA) forms a coiled coil.

Interacts with POM33.

It localises to the endoplasmic reticulum membrane. This Saccharomyces cerevisiae (strain ATCC 204508 / S288c) (Baker's yeast) protein is Reticulon-like protein 1 (RTN1).